Reading from the N-terminus, the 1194-residue chain is MTPQQKSAAHLPLLYNPFLNCIFNNPYYNKAPFKQTIEELARNHNDFTILVPPAHVLHHCYDPATELSSHKVLLRELCYNNEEFIRSHIIRTGTSYSSTITPISKVQSVIYNTMSGKQVLFKNGMVFMGKGFKRSLKLNVLSFQYFSSFCDYFPKGSKFMILYVEDCLIGSFDPHQHLSRIPQDDETSSQRSVSQQEVQDSITFEKLLRSFPLLSKAVSERFYRLFHHNNHQFRVLRINTRKKLEHIRIEFHSMLDEAYKIIQDSIKVENPDSEQTYNIINHILSIYPGLDLNRLVHDYVELNLYDKLWAQLLFQYNYPNDDKQSYDPEAVKFLTAETYNRLSCLALNQLDIPIFKPWQINTLQEKVALAIEEFSKLADSSIVNSTAKTKIIINTVNILSDLKSGSDFVMDADVLIGLLIMVIVHSKIDNLEAHLYYIKNFSAIDYSGDGHFNYIMSNLDAVLFHLSSSLSDELSDLIVHSQQNFEFWSAIQQGDVDAAKTMLDEVHENYVGKEIPSSHYLKSKNINGESCIMFAIKAKNFSIYDMLINEHPNWFSIDELLFDKNIITNQNLVMVALADECPEIATDLVNVILSSATKEEQVAYFNSVDNAGRSVGHYLFHNYKLMGILGDIIDWELKDLNSHTPLFSICRCYDHPNYPTLISEAFACVYQKYGGENINFDKHIDKSGNTLLHIILKNIPESQLLSRKENLISVNQQSSKYMTPLTLYVKYYRLENLKDLLQDNRLDFLLEDSKNCYNVFDYFGFSSMKSTIPNETFKKIESLIFGFYIDNFLPKVDCKKLFSLNAKYDQNKRDWFIFFRDSDGISNHKSLEMLKQIIYFIKLDNPCTYLPDKDVVWLNYGLGSTTPYFHKYRINRLIDTLNLFFTGLLYRNGNCYFERFLETGRDRERSTLDFIQEASLRQEKKRANLGVVKLKSSQIDEIEFFLTFAISDLYKYKDALHKFGKLSAIADMKQTDIRTVYLSALKKLVDREGNYTDELKSKVPVEAEIQDSCWGGFHSYVFWLQISLDELLKSVNKILEEIRTWKELYSSIRELNSELHQIEEKSPSNNNGGSLSRRSTFSIEPIPELDFEDDTTSAFFNFSNIIESKKARYKKLLMTKSEKVKQIMKLNVDIKWEHEVVASEISSFLKFRCDFLRFGVKTYVNSETKRIRNNSIELRKLLRDVKNNGKSYRK.

In terms of domain architecture, VPS9 spans 324–475; the sequence is QSYDPEAVKF…LSSSLSDELS (152 aa).

It belongs to the UPF0507 family.

This is UPF0507 protein PICST_55861 from Scheffersomyces stipitis (strain ATCC 58785 / CBS 6054 / NBRC 10063 / NRRL Y-11545) (Yeast).